The primary structure comprises 414 residues: Glucose-1-phosphate adenylyltransferase (414 aa).

Alpha-D-glucose 1-phosphate-binding positions include Y99, G164, 181 to 182 (EK), and S199.

Belongs to the bacterial/plant glucose-1-phosphate adenylyltransferase family. As to quaternary structure, homotetramer.

The enzyme catalyses alpha-D-glucose 1-phosphate + ATP + H(+) = ADP-alpha-D-glucose + diphosphate. It functions in the pathway glycan biosynthesis; glycogen biosynthesis. Its function is as follows. Involved in the biosynthesis of ADP-glucose, a building block required for the elongation reactions to produce glycogen. Catalyzes the reaction between ATP and alpha-D-glucose 1-phosphate (G1P) to produce pyrophosphate and ADP-Glc. In Bifidobacterium adolescentis (strain ATCC 15703 / DSM 20083 / NCTC 11814 / E194a), this protein is Glucose-1-phosphate adenylyltransferase.